Consider the following 289-residue polypeptide: ATP synthase gamma chain (289 aa).

The protein belongs to the ATPase gamma chain family. As to quaternary structure, F-type ATPases have 2 components, CF(1) - the catalytic core - and CF(0) - the membrane proton channel. CF(1) has five subunits: alpha(3), beta(3), gamma(1), delta(1), epsilon(1). CF(0) has three main subunits: a, b and c.

Its subcellular location is the cell inner membrane. Produces ATP from ADP in the presence of a proton gradient across the membrane. The gamma chain is believed to be important in regulating ATPase activity and the flow of protons through the CF(0) complex. The protein is ATP synthase gamma chain of Acinetobacter baumannii (strain AB307-0294).